Here is a 452-residue protein sequence, read N- to C-terminus: mRNA export factor ICP27 homolog (452 aa).

The tract at residues 42-164 (EAIGSTPGED…RNDQTHDESY (123 aa)) is disordered. The span at 98–107 (SNHHGGRDVE) shows a compositional bias: basic and acidic residues. Residues 129–144 (SRKHRDRSLSNRRRRP) show a composition bias toward basic residues. Basic and acidic residues predominate over residues 154 to 164 (ERNDQTHDESY). The Zn(2+) site is built by cysteine 335, histidine 417, cysteine 421, and cysteine 426. The CHC2-type zinc finger occupies 335 to 426 (CLLLNRDNDL…HQRECGRVEC (92 aa)).

This sequence belongs to the HHV-1 ICP27 protein family. In terms of assembly, homodimer. Homodimerization is required for transactivation. Associates in a complex with RNA, and host export factors NXF1/TAP and ALYREF; these interactions allow nuclear export of viral transcripts. Interacts with three host shuttling SR proteins SRSF1, SRSF3 and SRSF7. Interacts with host SRPK1. Interacts with IE62; this interaction enhances IE62 transactivation. Phosphorylated in vitro by SRPK1.

Its subcellular location is the host cytoplasm. The protein localises to the host nucleus. Multifunctional regulator of the expression of viral genes that mediates nuclear export of viral intronless mRNAs. This immediate early (EI) protein promotes the nuclear export of viral intronless mRNAs by interacting with mRNAs and host NXF1/TAP. In Varicella-zoster virus (strain Dumas) (HHV-3), this protein is mRNA export factor ICP27 homolog.